The following is a 57-amino-acid chain: MFRYTRFEKARIIGARALQIAMGAPVLIDVPEGITPLQAALLEFEKGVIPITVIRPS.

Belongs to the archaeal Rpo6/eukaryotic RPB6 RNA polymerase subunit family. In terms of assembly, part of the RNA polymerase complex.

The protein localises to the cytoplasm. Its subcellular location is the chromosome. The enzyme catalyses RNA(n) + a ribonucleoside 5'-triphosphate = RNA(n+1) + diphosphate. In terms of biological role, DNA-dependent RNA polymerase (RNAP) catalyzes the transcription of DNA into RNA using the four ribonucleoside triphosphates as substrates. The polypeptide is DNA-directed RNA polymerase subunit Rpo6 (Thermococcus kodakarensis (strain ATCC BAA-918 / JCM 12380 / KOD1) (Pyrococcus kodakaraensis (strain KOD1))).